Here is a 316-residue protein sequence, read N- to C-terminus: SWR complex protein 2 (316 aa).

Disordered stretches follow at residues 1–81 (MSAT…GEEV), 93–127 (KRKI…KKKY), and 153–180 (ETRL…TMTQ). Over residues 20–31 (KMRELLEKEHLR) the composition is skewed to basic and acidic residues. Positions 20 to 95 (KMRELLEKEH…RDEERIKKRK (76 aa)) form a coiled coil. Acidic residues predominate over residues 40-56 (EKEDEEYNIEEEEEAER). Residues serine 64 and serine 65 each carry the phosphoserine modification. The segment covering 70 to 81 (ELKKLEEEGEEV) has biased composition (basic and acidic residues). The span at 167-180 (VSASANRQKGTMTQ) shows a compositional bias: polar residues.

It belongs to the VPS72/YL1 family. Component of the SWR1 chromatin-remodeling complex.

It is found in the nucleus. In terms of biological role, participates in the catalytic exchange of histone H2A for the H2A variant pht1, an euchromatin-specific factor, leading to chromatin remodeling and changes in transcription of targeted genes. The sequence is that of SWR complex protein 2 (swc2) from Schizosaccharomyces pombe (strain 972 / ATCC 24843) (Fission yeast).